A 130-amino-acid polypeptide reads, in one-letter code: Fluoride-specific ion channel FluC 2 (130 aa).

4 helical membrane passes run 4–24 (GLST…GAIC), 38–58 (NLWG…FFLA), 72–92 (LYLL…SLIL), and 103–123 (WMEL…FISL). Na(+) is bound by residues Gly82 and Ser85.

It belongs to the fluoride channel Fluc/FEX (TC 1.A.43) family.

It localises to the cell inner membrane. It carries out the reaction fluoride(in) = fluoride(out). Na(+) is not transported, but it plays an essential structural role and its presence is essential for fluoride channel function. In terms of biological role, fluoride-specific ion channel. Important for reducing fluoride concentration in the cell, thus reducing its toxicity. This chain is Fluoride-specific ion channel FluC 2, found in Prochlorococcus marinus (strain SARG / CCMP1375 / SS120).